We begin with the raw amino-acid sequence, 356 residues long: S-adenosylmethionine:tRNA ribosyltransferase-isomerase (356 aa).

Belongs to the QueA family. Monomer.

It localises to the cytoplasm. It carries out the reaction 7-aminomethyl-7-carbaguanosine(34) in tRNA + S-adenosyl-L-methionine = epoxyqueuosine(34) in tRNA + adenine + L-methionine + 2 H(+). Its pathway is tRNA modification; tRNA-queuosine biosynthesis. In terms of biological role, transfers and isomerizes the ribose moiety from AdoMet to the 7-aminomethyl group of 7-deazaguanine (preQ1-tRNA) to give epoxyqueuosine (oQ-tRNA). This Escherichia coli O6:K15:H31 (strain 536 / UPEC) protein is S-adenosylmethionine:tRNA ribosyltransferase-isomerase.